The sequence spans 138 residues: Large ribosomal subunit protein uL16 (138 aa).

Residues 1-15 (MLSPRKVKYRKKQRG) show a composition bias toward basic residues. The disordered stretch occupies residues 1–20 (MLSPRKVKYRKKQRGRLSGE).

Belongs to the universal ribosomal protein uL16 family. Part of the 50S ribosomal subunit.

Functionally, binds 23S rRNA and is also seen to make contacts with the A and possibly P site tRNAs. This Borrelia turicatae (strain 91E135) protein is Large ribosomal subunit protein uL16.